We begin with the raw amino-acid sequence, 123 residues long: Holo-[acyl-carrier-protein] synthase (123 aa).

D8 and E60 together coordinate Mg(2+).

It belongs to the P-Pant transferase superfamily. AcpS family. The cofactor is Mg(2+).

The protein resides in the cytoplasm. It catalyses the reaction apo-[ACP] + CoA = holo-[ACP] + adenosine 3',5'-bisphosphate + H(+). Transfers the 4'-phosphopantetheine moiety from coenzyme A to a Ser of acyl-carrier-protein. The chain is Holo-[acyl-carrier-protein] synthase from Ehrlichia ruminantium (strain Welgevonden).